We begin with the raw amino-acid sequence, 189 residues long: HGPRTase-like protein (189 aa).

It belongs to the purine/pyrimidine phosphoribosyltransferase family. Archaeal HPRT subfamily.

Its function is as follows. May catalyze a purine salvage reaction, the substrate is unknown. The polypeptide is HGPRTase-like protein (Halorhabdus utahensis (strain DSM 12940 / JCM 11049 / AX-2)).